Consider the following 170-residue polypeptide: ATP synthase subunit b (170 aa).

The helical transmembrane segment at 22–41 threads the bilayer; it reads ILNWAVVVFGLYKFLPGFLG. A disordered region spans residues 72 to 98; it reads AKKDLSSAEEKASQIKADSLKRSESIR.

It belongs to the ATPase B chain family. As to quaternary structure, F-type ATPases have 2 components, F(1) - the catalytic core - and F(0) - the membrane proton channel. F(1) has five subunits: alpha(3), beta(3), gamma(1), delta(1), epsilon(1). F(0) has four main subunits: a(1), b(1), b'(1) and c(10-14). The alpha and beta chains form an alternating ring which encloses part of the gamma chain. F(1) is attached to F(0) by a central stalk formed by the gamma and epsilon chains, while a peripheral stalk is formed by the delta, b and b' chains.

Its subcellular location is the cellular thylakoid membrane. Its function is as follows. F(1)F(0) ATP synthase produces ATP from ADP in the presence of a proton or sodium gradient. F-type ATPases consist of two structural domains, F(1) containing the extramembraneous catalytic core and F(0) containing the membrane proton channel, linked together by a central stalk and a peripheral stalk. During catalysis, ATP synthesis in the catalytic domain of F(1) is coupled via a rotary mechanism of the central stalk subunits to proton translocation. Component of the F(0) channel, it forms part of the peripheral stalk, linking F(1) to F(0). The sequence is that of ATP synthase subunit b from Prochlorococcus marinus (strain MIT 9301).